The following is a 603-amino-acid chain: Geraniol synthase, chloroplastic (603 aa).

The N-terminal 35 residues, 1-35 (MSSISQKVVIGLNKAAANNNLQNLDRRGFKTRCVS), are a transit peptide targeting the chloroplast. The (2E)-geranyl diphosphate site is built by Arg319, Asp356, Asp360, Arg497, and Asp500. 2 residues coordinate Mg(2+): Asp356 and Asp360. The DDXXD motif motif lies at 356–360 (DDVYD). Positions 500, 504, and 508 each coordinate Mg(2+).

The protein belongs to the terpene synthase family. Tpsb subfamily. Monomer. It depends on Mg(2+) as a cofactor. Mn(2+) is required as a cofactor.

Its subcellular location is the plastid. The protein localises to the chloroplast. It catalyses the reaction (2E)-geranyl diphosphate + H2O = (2E)-geraniol + diphosphate. It functions in the pathway secondary metabolite biosynthesis; terpenoid biosynthesis. Its function is as follows. Monoterpene synthase (mono-TPS) involved in the biosynthesis of monoterpenes natural products. Catalyzes the conversion of (2E)-geranyl diphosphate (GPP) into geraniol. The protein is Geraniol synthase, chloroplastic of Perilla frutescens var. hirtella (Perilla citriodora).